The sequence spans 244 residues: MTATVEIRRAADRAVTTTSWLKSRHSFSFGDHYDPDNTHHGLLLVNNDDQMEPASGFDPHPHRDMEIVTWVLRGALRHQDSAGNSGVIYPGLAQRMSAGTGILHSEMNDSATEPVHFVQMWVIPDATGITASYQQQEIDDELLRAGLVTIASGIPGQDAALTLHNSSASLHGARLRPGATVSLPCAPFLHLFVAYGRLTLEGGGELADGDAVRFTDADARGLTANEPSEVLIWEMHAKLGDSAT.

The a divalent metal cation site is built by histidine 60, histidine 62, histidine 104, and glutamate 106.

Belongs to the pirin family. A divalent metal cation serves as cofactor.

It catalyses the reaction quercetin + O2 = 2-(3,4-dihydroxybenzoyloxy)-4,6-dihydroxybenzoate + CO. Its pathway is flavonoid metabolism; quercetin degradation. Functionally, putative quercetin 2,3-dioxygenase. The sequence is that of Putative quercetin 2,3-dioxygenase Mb0187c from Mycobacterium bovis (strain ATCC BAA-935 / AF2122/97).